A 294-amino-acid chain; its full sequence is 33 kDa chaperonin (294 aa).

Disulfide bonds link cysteine 239–cysteine 241 and cysteine 272–cysteine 275.

Belongs to the HSP33 family. Post-translationally, under oxidizing conditions two disulfide bonds are formed involving the reactive cysteines. Under reducing conditions zinc is bound to the reactive cysteines and the protein is inactive.

Its subcellular location is the cytoplasm. Functionally, redox regulated molecular chaperone. Protects both thermally unfolding and oxidatively damaged proteins from irreversible aggregation. Plays an important role in the bacterial defense system toward oxidative stress. The polypeptide is 33 kDa chaperonin (Listeria innocua serovar 6a (strain ATCC BAA-680 / CLIP 11262)).